Reading from the N-terminus, the 246-residue chain is tRNA pseudouridine synthase A (246 aa).

Catalysis depends on Asp-52, which acts as the Nucleophile. A substrate-binding site is contributed by Tyr-111.

Belongs to the tRNA pseudouridine synthase TruA family. As to quaternary structure, homodimer.

The catalysed reaction is uridine(38/39/40) in tRNA = pseudouridine(38/39/40) in tRNA. In terms of biological role, formation of pseudouridine at positions 38, 39 and 40 in the anticodon stem and loop of transfer RNAs. The sequence is that of tRNA pseudouridine synthase A from Borreliella afzelii (strain PKo) (Borrelia afzelii).